Here is a 197-residue protein sequence, read N- to C-terminus: Small ribosomal subunit protein uS4 (197 aa).

Residues 87–147 enclose the S4 RNA-binding domain; it reads SRIDNVIFRL…ESKKNTQRMK (61 aa).

It belongs to the universal ribosomal protein uS4 family. In terms of assembly, part of the 30S ribosomal subunit. Contacts protein S5. The interaction surface between S4 and S5 is involved in control of translational fidelity.

Functionally, one of the primary rRNA binding proteins, it binds directly to 16S rRNA where it nucleates assembly of the body of the 30S subunit. In terms of biological role, with S5 and S12 plays an important role in translational accuracy. The polypeptide is Small ribosomal subunit protein uS4 (Agathobacter rectalis (strain ATCC 33656 / DSM 3377 / JCM 17463 / KCTC 5835 / VPI 0990) (Eubacterium rectale)).